Reading from the N-terminus, the 492-residue chain is Aspartyl/glutamyl-tRNA(Asn/Gln) amidotransferase subunit B (492 aa).

It belongs to the GatB/GatE family. GatB subfamily. As to quaternary structure, heterotrimer of A, B and C subunits.

It carries out the reaction L-glutamyl-tRNA(Gln) + L-glutamine + ATP + H2O = L-glutaminyl-tRNA(Gln) + L-glutamate + ADP + phosphate + H(+). The enzyme catalyses L-aspartyl-tRNA(Asn) + L-glutamine + ATP + H2O = L-asparaginyl-tRNA(Asn) + L-glutamate + ADP + phosphate + 2 H(+). Its function is as follows. Allows the formation of correctly charged Asn-tRNA(Asn) or Gln-tRNA(Gln) through the transamidation of misacylated Asp-tRNA(Asn) or Glu-tRNA(Gln) in organisms which lack either or both of asparaginyl-tRNA or glutaminyl-tRNA synthetases. The reaction takes place in the presence of glutamine and ATP through an activated phospho-Asp-tRNA(Asn) or phospho-Glu-tRNA(Gln). This chain is Aspartyl/glutamyl-tRNA(Asn/Gln) amidotransferase subunit B, found in Pelagibacter ubique (strain HTCC1062).